Reading from the N-terminus, the 508-residue chain is General transcription factor IIF subunit 1 (508 aa).

Residue A2 is modified to N-acetylalanine. Position 156 is a phosphothreonine (T156). The segment at 177–448 is disordered; the sequence is MQQRRLKDQD…SSGDVQVTED (272 aa). A phosphoserine mark is found at S217, S218, S221, and S224. Residues 232 to 251 show a composition bias toward basic residues; that stretch reads SKAKKKAPVTKAGRKKKKKK. Composition is skewed to acidic residues over residues 255–270 and 303–325; these read DEAF…EGQE and EQSE…EEEE. T331 is modified (phosphothreonine). Acidic residues predominate over residues 343–355; that stretch reads DDSDSSEESDIDS. Over residues 364–374 the composition is skewed to basic residues; that stretch reads AKKKTPPKRER. S377, S380, S381, and S385 each carry phosphoserine. Polar residues predominate over residues 378 to 388; that stretch reads GGSSKGTSRPG. T389 bears the Phosphothreonine mark. Over residues 389–406 the composition is skewed to low complexity; that stretch reads TPSAEAASTSSTLRAAAS. S391 is modified (phosphoserine). K407 is subject to N6-acetyllysine. Residues 428 to 443 show a composition bias toward polar residues; it reads GPQSLSGKSTPSSGDV. 3 positions are modified to phosphoserine: S431, S433, and S436. T437 bears the Phosphothreonine mark. Residue S440 is modified to Phosphoserine.

The protein belongs to the TFIIF alpha subunit family. Heterodimer of an alpha and a beta subunit. Interacts with GTF2F2, CTDP1, TAF6/TAFII80 and URI1. Interacts with GTF2B (via C-terminus and preferentially via acetylated form); this interaction prevents binding of GTF2B to GTF2F2. Part of TBP-based Pol II pre-initiation complex (PIC), in which Pol II core assembles with general transcription factors and other specific initiation factors including GTF2E1, GTF2E2, GTF2F1, GTF2F2, TCEA1, ERCC2, ERCC3, GTF2H2, GTF2H3, GTF2H4, GTF2H5, GTF2A1, GTF2A2, GTF2B and TBP; this large multi-subunit PIC complex mediates DNA unwinding and targets Pol II core to the transcription start site where the first phosphodiester bond forms. In terms of processing, phosphorylated on Ser and other residues by TAF1 and casein kinase II-like kinases.

It is found in the nucleus. TFIIF is a general transcription initiation factor that binds to RNA polymerase II and helps to recruit it to the initiation complex in collaboration with TFIIB. It promotes transcription elongation. This chain is General transcription factor IIF subunit 1 (Gtf2f1), found in Rattus norvegicus (Rat).